The following is a 130-amino-acid chain: Small ribosomal subunit protein bS16 (130 aa).

Residues 82 to 130 form a disordered region; sequence VLPKTERNNPKKAVPGKKAQDRAEEKAAKAAEASEAPADEAPAEEAAAE. Basic and acidic residues predominate over residues 99–110; the sequence is KAQDRAEEKAAK. Acidic residues predominate over residues 118 to 130; it reads PADEAPAEEAAAE.

The protein belongs to the bacterial ribosomal protein bS16 family.

The sequence is that of Small ribosomal subunit protein bS16 from Dinoroseobacter shibae (strain DSM 16493 / NCIMB 14021 / DFL 12).